We begin with the raw amino-acid sequence, 563 residues long: Zinc finger protein 503 (563 aa).

The span at 1-10 (MITSPSASRN) shows a compositional bias: polar residues. Disordered regions lie at residues 1–48 (MITS…PLRQ) and 101–226 (SQIG…TSVS). Low complexity-rich tracts occupy residues 19 to 33 (SSSS…AVAS) and 112 to 122 (SKLSSVTSNGS). The span at 174–194 (ATCQPFTPRTGSPNSSTSASP) shows a compositional bias: polar residues. Over residues 199–211 (GKGERDEKKDSDC) the composition is skewed to basic and acidic residues. Positions 212–226 (NKNCSSDGSAPTSVS) are enriched in polar residues. The segment at 431 to 459 (HVCNWVSANGPCDKRFSSSEELLNHLRTH) adopts a C2H2-type zinc-finger fold.

Belongs to the Elbow/Noc family. As to quaternary structure, interacts with nlz1.

The protein resides in the nucleus. Functionally, required for segmental gene expression during hindbrain development. May function as a transcriptional repressor. The protein is Zinc finger protein 503 (znf503) of Danio rerio (Zebrafish).